A 521-amino-acid chain; its full sequence is Matrix metalloproteinase-A (521 aa).

Positions 1-21 (MFTGLHDILIILFLLVTLKIA) are cleaved as a signal peptide. A propeptide spans 22 to 95 (QNVDHTKFLQ…EDHQKSRGKR (74 aa)) (activation peptide). A Cysteine switch motif is present at residues 78-85 (PRCGHPDV). C80 lines the Zn(2+) pocket. Over 96–500 (YAPPQFKWKE…FCPRNEKLVL (405 aa)) the chain is Extracellular. N199 carries an N-linked (GlcNAc...) asparagine glycan. H215 contributes to the Zn(2+) binding site. Residue E216 is part of the active site. Positions 219 and 225 each coordinate Zn(2+). Positions 259–298 (KASKKENEEEERKTENEDKRRKTEKDRGRTREHESDDIRP) are disordered. Positions 261 to 298 (SKKENEEEERKTENEDKRRKTEKDRGRTREHESDDIRP) are enriched in basic and acidic residues. 3 Hemopexin repeats span residues 300–347 (ECRV…FPGL), 391–443 (EKYV…WARV), and 444–492 (PKGV…FGFC). N469 carries N-linked (GlcNAc...) asparagine glycosylation. Residues 501 to 521 (NSSSSHFSLIYATITILILIF) traverse the membrane as a helical segment.

Belongs to the peptidase M10A family. Zn(2+) serves as cofactor. As to expression, expressed in the anchor cell. Expressed in the anchor cell throughout the L3 and the early L4 stage, but not in vulva precursor cells P6.p, P6.px, or P6.pxx. Expression in P6.pxxx cells begins in late-L4 stage. During L4 lethargus, expressed in all four vulE cells, but not in vulF cells. The expression in vulE cells persists in adulthood. In males, expressed in the linker cell (LC) from the early L4 stage until LC death during the L4-to-adult molt.

The protein resides in the cell membrane. It is found in the basolateral cell membrane. In terms of biological role, metalloprotease which, together with cadherin cdh-3 and hemicentin him-4, plays a role in anchor cell (AC) invasion during postembryonic vulval development probably by promoting the degradation of the basement membrane separating the gonad from the vulva epithelium. This is Matrix metalloproteinase-A from Caenorhabditis elegans.